The sequence spans 51 residues: Putative inactivation escape 1 protein (51 aa).

Highly expressed in pancreas, heart and liver followed by brain, placenta, lung, skeletal muscle and kidney. Mostly expressed in females.

In Homo sapiens (Human), this protein is Putative inactivation escape 1 protein (INE1).